The following is a 290-amino-acid chain: S-adenosylmethionine decarboxylase proenzyme (290 aa).

Serine 138 functions as the Schiff-base intermediate with substrate; via pyruvic acid in the catalytic mechanism. Serine 138 carries the pyruvic acid (Ser); by autocatalysis modification. Residue histidine 143 is the Proton acceptor; for processing activity of the active site. Cysteine 166 functions as the Proton donor; for catalytic activity in the catalytic mechanism.

It belongs to the prokaryotic AdoMetDC family. Type 2 subfamily. Heterooctamer of four alpha and four beta chains arranged as a tetramer of alpha/beta heterodimers. Pyruvate serves as cofactor. In terms of processing, is synthesized initially as an inactive proenzyme. Formation of the active enzyme involves a self-maturation process in which the active site pyruvoyl group is generated from an internal serine residue via an autocatalytic post-translational modification. Two non-identical subunits are generated from the proenzyme in this reaction, and the pyruvate is formed at the N-terminus of the alpha chain, which is derived from the carboxyl end of the proenzyme. The post-translation cleavage follows an unusual pathway, termed non-hydrolytic serinolysis, in which the side chain hydroxyl group of the serine supplies its oxygen atom to form the C-terminus of the beta chain, while the remainder of the serine residue undergoes an oxidative deamination to produce ammonia and the pyruvoyl group blocking the N-terminus of the alpha chain.

It carries out the reaction S-adenosyl-L-methionine + H(+) = S-adenosyl 3-(methylsulfanyl)propylamine + CO2. The protein operates within amine and polyamine biosynthesis; S-adenosylmethioninamine biosynthesis; S-adenosylmethioninamine from S-adenosyl-L-methionine: step 1/1. Its function is as follows. Catalyzes the decarboxylation of S-adenosylmethionine to S-adenosylmethioninamine (dcAdoMet), the propylamine donor required for the synthesis of the polyamines spermine and spermidine from the diamine putrescine. This chain is S-adenosylmethionine decarboxylase proenzyme, found in Heliobacterium modesticaldum (strain ATCC 51547 / Ice1).